A 477-amino-acid polypeptide reads, in one-letter code: Glycogen synthase (477 aa).

Lysine 15 is an ADP-alpha-D-glucose binding site.

It belongs to the glycosyltransferase 1 family. Bacterial/plant glycogen synthase subfamily.

The enzyme catalyses [(1-&gt;4)-alpha-D-glucosyl](n) + ADP-alpha-D-glucose = [(1-&gt;4)-alpha-D-glucosyl](n+1) + ADP + H(+). It participates in glycan biosynthesis; glycogen biosynthesis. Functionally, synthesizes alpha-1,4-glucan chains using ADP-glucose. The polypeptide is Glycogen synthase (Streptococcus pneumoniae (strain JJA)).